We begin with the raw amino-acid sequence, 225 residues long: Uracil-DNA glycosylase (225 aa).

Asp68 serves as the catalytic Proton acceptor.

This sequence belongs to the uracil-DNA glycosylase (UDG) superfamily. UNG family.

The protein localises to the cytoplasm. It catalyses the reaction Hydrolyzes single-stranded DNA or mismatched double-stranded DNA and polynucleotides, releasing free uracil.. In terms of biological role, excises uracil residues from the DNA which can arise as a result of misincorporation of dUMP residues by DNA polymerase or due to deamination of cytosine. The chain is Uracil-DNA glycosylase from Parafrankia sp. (strain EAN1pec).